The sequence spans 339 residues: Ketol-acid reductoisomerase (NADP(+)) (339 aa).

The KARI N-terminal Rossmann domain maps to 1–182; the sequence is MRVYYDRDAD…GGGRSGIIET (182 aa). NADP(+) is bound by residues 24–27, R48, S51, T53, and 83–86; these read YGSQ and DEHQ. H108 is a catalytic residue. Residue G134 coordinates NADP(+). The region spanning 183–328 is the KARI C-terminal knotted domain; the sequence is NFREECETDL…ARLRGMMPWI (146 aa). D191, E195, E227, and E231 together coordinate Mg(2+). Residue S252 coordinates substrate.

This sequence belongs to the ketol-acid reductoisomerase family. Requires Mg(2+) as cofactor.

The catalysed reaction is (2R)-2,3-dihydroxy-3-methylbutanoate + NADP(+) = (2S)-2-acetolactate + NADPH + H(+). It carries out the reaction (2R,3R)-2,3-dihydroxy-3-methylpentanoate + NADP(+) = (S)-2-ethyl-2-hydroxy-3-oxobutanoate + NADPH + H(+). The protein operates within amino-acid biosynthesis; L-isoleucine biosynthesis; L-isoleucine from 2-oxobutanoate: step 2/4. It functions in the pathway amino-acid biosynthesis; L-valine biosynthesis; L-valine from pyruvate: step 2/4. In terms of biological role, involved in the biosynthesis of branched-chain amino acids (BCAA). Catalyzes an alkyl-migration followed by a ketol-acid reduction of (S)-2-acetolactate (S2AL) to yield (R)-2,3-dihydroxy-isovalerate. In the isomerase reaction, S2AL is rearranged via a Mg-dependent methyl migration to produce 3-hydroxy-3-methyl-2-ketobutyrate (HMKB). In the reductase reaction, this 2-ketoacid undergoes a metal-dependent reduction by NADPH to yield (R)-2,3-dihydroxy-isovalerate. The chain is Ketol-acid reductoisomerase (NADP(+)) from Caulobacter sp. (strain K31).